A 156-amino-acid polypeptide reads, in one-letter code: Small ribosomal subunit protein uS7 (156 aa).

Belongs to the universal ribosomal protein uS7 family. Part of the 30S ribosomal subunit. Contacts proteins S9 and S11.

Functionally, one of the primary rRNA binding proteins, it binds directly to 16S rRNA where it nucleates assembly of the head domain of the 30S subunit. Is located at the subunit interface close to the decoding center, probably blocks exit of the E-site tRNA. The sequence is that of Small ribosomal subunit protein uS7 from Shewanella amazonensis (strain ATCC BAA-1098 / SB2B).